A 160-amino-acid chain; its full sequence is MKLRIGHGFDVHKFGGDKPLILGGVTVPYDTGLIAHSDGDVVLHAISDAILGAMALGDIGKHFPDTDDAFSGADSRVLLRHCYQLALNKHFQLGNLDVTVIAQAPKMAPHIEAIRQLLALDLNTDIDNINVKATTTEKLGFTGRKEGIAVEAVVLMQQAI.

Residues aspartate 10 and histidine 12 each contribute to the a divalent metal cation site. 4-CDP-2-C-methyl-D-erythritol 2-phosphate contacts are provided by residues 10-12 (DVH) and 36-37 (HS). An a divalent metal cation-binding site is contributed by histidine 44. Residues 58 to 60 (DIG), 63 to 67 (FPDTD), 102 to 108 (AQAPKMA), 134 to 137 (TTTE), phenylalanine 141, and arginine 144 contribute to the 4-CDP-2-C-methyl-D-erythritol 2-phosphate site.

Belongs to the IspF family. Homotrimer. It depends on a divalent metal cation as a cofactor.

The enzyme catalyses 4-CDP-2-C-methyl-D-erythritol 2-phosphate = 2-C-methyl-D-erythritol 2,4-cyclic diphosphate + CMP. It participates in isoprenoid biosynthesis; isopentenyl diphosphate biosynthesis via DXP pathway; isopentenyl diphosphate from 1-deoxy-D-xylulose 5-phosphate: step 4/6. Its function is as follows. Involved in the biosynthesis of isopentenyl diphosphate (IPP) and dimethylallyl diphosphate (DMAPP), two major building blocks of isoprenoid compounds. Catalyzes the conversion of 4-diphosphocytidyl-2-C-methyl-D-erythritol 2-phosphate (CDP-ME2P) to 2-C-methyl-D-erythritol 2,4-cyclodiphosphate (ME-CPP) with a corresponding release of cytidine 5-monophosphate (CMP). The polypeptide is 2-C-methyl-D-erythritol 2,4-cyclodiphosphate synthase (Shewanella denitrificans (strain OS217 / ATCC BAA-1090 / DSM 15013)).